The chain runs to 269 residues: Aquaporin-1 (269 aa).

Topologically, residues A2–W11 are cytoplasmic. Residues R12–I29 form a helical membrane-spanning segment. The Extracellular portion of the chain corresponds to G30–V46. The N-linked (GlcNAc...) asparagine glycan is linked to N42. A helical transmembrane segment spans residues Q47–Q65. The Cytoplasmic segment spans residues S66–G68. The stretch at H69–G82 is an intramembrane region. The NPA 1 signature appears at N76–A78. At L83–S90 the chain is on the cytoplasmic side. A helical transmembrane segment spans residues I91–T109. Residues A110 to V133 lie on the Extracellular side of the membrane. A helical transmembrane segment spans residues N134–V153. Over L154–D163 the chain is Cytoplasmic. The helical transmembrane segment at L164–L181 threads the bilayer. Over L182–Y186 the chain is Extracellular. An intramembrane segment occupies T187–S199. The short motif at N192–A194 is the NPA 2 element. Over A200 to F206 the chain is Extracellular. N205 carries N-linked (GlcNAc...) asparagine glycosylation. Residues S207–V224 traverse the membrane as a helical segment. The Cytoplasmic portion of the chain corresponds to L225–K269. Position 247 is a phosphoserine (S247). Y253 is modified (phosphotyrosine). S262 carries the post-translational modification Phosphoserine.

It belongs to the MIP/aquaporin (TC 1.A.8) family. In terms of assembly, homotetramer; each monomer provides an independent water pore. Component of the ankyrin-1 complex in the erythrocyte, composed of ANK1, RHCE, RHAG, SLC4A1, EPB42, GYPA, GYPB and AQP1. Interacts with EPHB2; involved in endolymph production in the inner ear. Identified in a complex with STOM. Interacts (via the N-terminal) with ANK1 (via ANK 1-5 repeats). Interacts (via the C-terminal) with EPB42. Detected in erythrocytes (at protein level). Expressed in a number of tissues including erythrocytes, renal tubules, retinal pigment epithelium, heart, lung, skeletal muscle, kidney and pancreas. Weakly expressed in brain, placenta and liver.

Its subcellular location is the cell membrane. The catalysed reaction is H2O(in) = H2O(out). It carries out the reaction nitric oxide(out) = nitric oxide(in). It catalyses the reaction CO2(out) = CO2(in). The enzyme catalyses glycerol(in) = glycerol(out). The catalysed reaction is H2O2(out) = H2O2(in). It carries out the reaction K(+)(in) = K(+)(out). It catalyses the reaction Na(+)(in) = Na(+)(out). Its activity is regulated as follows. The water channel activity is inhibited by P-choloromercuribenzene sulphonate and diethylpyrocarbonate(DPPC). The glycerol channel activity is inhibited by P-choloromercuribenzene sulphonate, diethylpyrocarbonate(DPPC), phloretin and Cu(2+). Inhibited by mercury. Its function is as follows. Forms a water channel that facilitates the transport of water across cell membranes, playing a crucial role in water homeostasis in various tissues. Could also be permeable to small solutes including hydrogen peroxide, glycerol and gases such as amonnia (NH3), nitric oxide (NO) and carbon dioxide (CO2). Recruited to the ankyrin-1 complex, a multiprotein complex of the erythrocyte membrane, it could be part of a CO2 metabolon, linking facilitated diffusion of CO2 across the membrane, anion exchange of Cl(-)/HCO3(-) and interconversion of dissolved CO2 and carbonic acid in the cytosol. In vitro, it shows non-selective gated cation channel activity and may be permeable to cations like K(+) and Na(+) in vivo. The chain is Aquaporin-1 from Homo sapiens (Human).